Here is a 902-residue protein sequence, read N- to C-terminus: Tiger protein B1 (902 aa).

The N-terminal stretch at 1 to 24 (MKVIYIYLLLLLVCKFLFVKSSCS) is a signal peptide. Topologically, residues 25–803 (LKVGKIECTK…IIYSENKSTG (779 aa)) are extracellular. Residues asparagine 43, asparagine 144, asparagine 184, asparagine 223, asparagine 272, asparagine 279, asparagine 288, asparagine 358, asparagine 389, asparagine 398, asparagine 437, asparagine 559, asparagine 628, asparagine 644, asparagine 706, asparagine 753, asparagine 764, asparagine 771, and asparagine 799 are each glycosylated (N-linked (GlcNAc...) asparagine). The 75-residue stretch at 249 to 323 (MEGVLNDNGG…ITIDGEYKSN (75 aa)) folds into the IPT/TIG 1 domain. IPT/TIG domains lie at 603–680 (PIIE…ISSS) and 704–788 (ITNT…IFQF). Residues 804–824 (FPNEMYLGFVVFVIFIALISF) traverse the membrane as a helical segment. The Cytoplasmic segment spans residues 825 to 902 (AAKNQIEKYF…IRRCFKEHTD (78 aa)).

It localises to the cell membrane. In terms of biological role, tgrB1 and tgrC1 are involved in kin discrimination. They play an essential role in aggregation and subsequent development. This is Tiger protein B1 (tgrB1) from Dictyostelium discoideum (Social amoeba).